The sequence spans 450 residues: Glutathione reductase (450 aa).

Positions 14, 15, 34, 41, 42, 50, and 115 each coordinate FAD. A glutathione-binding site is contributed by Ser14. Cysteines 42 and 47 form a disulfide. Positions 175, 178, 181, 198, 204, and 262 each coordinate NADP(+). Asp303 contributes to the FAD binding site. NADP(+) is bound at residue Asp309. Thr311 is a binding site for FAD. A glutathione-binding site is contributed by Arg319. Val342 is an NADP(+) binding site. Residue His439 participates in FAD binding. Residue His439 is the Proton acceptor of the active site.

Belongs to the class-I pyridine nucleotide-disulfide oxidoreductase family. As to quaternary structure, homodimer. FAD is required as a cofactor.

The protein resides in the cytoplasm. It carries out the reaction 2 glutathione + NADP(+) = glutathione disulfide + NADPH + H(+). In terms of biological role, catalyzes the reduction of glutathione disulfide (GSSG) to reduced glutathione (GSH). Constitutes the major mechanism to maintain a high GSH:GSSG ratio in the cytosol. The protein is Glutathione reductase (gor) of Streptococcus thermophilus.